The chain runs to 346 residues: Lysyl aminopeptidase (346 aa).

Zn(2+) contacts are provided by histidine 63 and aspartate 177. The active-site Proton acceptor is the glutamate 207. 3 residues coordinate Zn(2+): glutamate 208, aspartate 230, and histidine 314.

Homotetramer. The cofactor is Zn(2+).

The catalysed reaction is Preferentially, release of N-terminal lysine.. In terms of biological role, hydrolyzes di-, tri- and tetrapeptides with a lysine as the N-terminal amino acid and with Gly, Lys, Ala, Phe or Glu in the second position. This Pyrococcus furiosus (strain ATCC 43587 / DSM 3638 / JCM 8422 / Vc1) protein is Lysyl aminopeptidase.